A 72-amino-acid polypeptide reads, in one-letter code: Translation initiation factor IF-1 (72 aa).

In terms of domain architecture, S1-like spans 1-72 (MAREDLIEVE…SRGRITYRKK (72 aa)).

Belongs to the IF-1 family. Component of the 30S ribosomal translation pre-initiation complex which assembles on the 30S ribosome in the order IF-2 and IF-3, IF-1 and N-formylmethionyl-tRNA(fMet); mRNA recruitment can occur at any time during PIC assembly.

The protein resides in the cytoplasm. In terms of biological role, one of the essential components for the initiation of protein synthesis. Stabilizes the binding of IF-2 and IF-3 on the 30S subunit to which N-formylmethionyl-tRNA(fMet) subsequently binds. Helps modulate mRNA selection, yielding the 30S pre-initiation complex (PIC). Upon addition of the 50S ribosomal subunit IF-1, IF-2 and IF-3 are released leaving the mature 70S translation initiation complex. The sequence is that of Translation initiation factor IF-1 from Acholeplasma laidlawii (strain PG-8A).